Consider the following 478-residue polypeptide: Protein nucleotidyltransferase YdiU (478 aa).

Gly84, Gly86, Arg87, Lys107, Asp119, Gly120, Arg170, and Arg177 together coordinate ATP. Asp246 acts as the Proton acceptor in catalysis. 2 residues coordinate Mg(2+): Asn247 and Asp256. Asp256 serves as a coordination point for ATP.

It belongs to the SELO family. It depends on Mg(2+) as a cofactor. Mn(2+) serves as cofactor.

The catalysed reaction is L-seryl-[protein] + ATP = 3-O-(5'-adenylyl)-L-seryl-[protein] + diphosphate. It catalyses the reaction L-threonyl-[protein] + ATP = 3-O-(5'-adenylyl)-L-threonyl-[protein] + diphosphate. It carries out the reaction L-tyrosyl-[protein] + ATP = O-(5'-adenylyl)-L-tyrosyl-[protein] + diphosphate. The enzyme catalyses L-histidyl-[protein] + UTP = N(tele)-(5'-uridylyl)-L-histidyl-[protein] + diphosphate. The catalysed reaction is L-seryl-[protein] + UTP = O-(5'-uridylyl)-L-seryl-[protein] + diphosphate. It catalyses the reaction L-tyrosyl-[protein] + UTP = O-(5'-uridylyl)-L-tyrosyl-[protein] + diphosphate. Nucleotidyltransferase involved in the post-translational modification of proteins. It can catalyze the addition of adenosine monophosphate (AMP) or uridine monophosphate (UMP) to a protein, resulting in modifications known as AMPylation and UMPylation. The protein is Protein nucleotidyltransferase YdiU of Escherichia coli O127:H6 (strain E2348/69 / EPEC).